A 263-amino-acid chain; its full sequence is HTH-type transcriptional repressor NanR (263 aa).

Positions 1-24 are disordered; sequence MSPMNAFDSQTEDSSPAIGRNLRS. Positions 30 to 98 constitute an HTH gntR-type domain; sequence KKLSEMVEEE…NGERARVSRP (69 aa). The segment at residues 58–77 is a DNA-binding region (H-T-H motif); sequence ERELMAFFNVGRPSVREALA.

It belongs to the NanR family.

Transcriptional repressor that controls expression of the genes required for the catabolism of sialic acids. In Escherichia coli O127:H6 (strain E2348/69 / EPEC), this protein is HTH-type transcriptional repressor NanR.